Reading from the N-terminus, the 197-residue chain is Guanylate kinase (197 aa).

Positions S6–S191 constitute a Guanylate kinase-like domain. An ATP-binding site is contributed by G13 to G20.

The protein belongs to the guanylate kinase family.

It is found in the cytoplasm. The catalysed reaction is GMP + ATP = GDP + ADP. Essential for recycling GMP and indirectly, cGMP. The sequence is that of Guanylate kinase from Mesomycoplasma hyopneumoniae (strain 7448) (Mycoplasma hyopneumoniae).